Reading from the N-terminus, the 962-residue chain is Probable transport protein MmpL9 (962 aa).

The next 12 membrane-spanning stretches (helical) occupy residues 25–45 (LAAI…SVAV), 201–223 (LITG…SIAT), 225–247 (LLIL…FLGY), 256–276 (FVVN…AIFL), 302–322 (ANVI…LSFA), 335–355 (AIGM…IIAI), 383–403 (WPGP…LALP), 768–788 (YDIL…MLMI), 796–816 (LVIV…SVLI), 820–840 (FVGL…LLAV), 867–887 (AMAG…FTMA), and 895–915 (RVIG…TLVV).

It belongs to the resistance-nodulation-cell division (RND) (TC 2.A.6) family. MmpL subfamily.

It localises to the cell membrane. In Mycobacterium tuberculosis (strain ATCC 25618 / H37Rv), this protein is Probable transport protein MmpL9 (mmpL9).